We begin with the raw amino-acid sequence, 525 residues long: GMP synthase [glutamine-hydrolyzing] (525 aa).

The Glutamine amidotransferase type-1 domain maps to 8–206 (PLLILDFGSQ…VVDICKAPTE (199 aa)). Cys-85 functions as the Nucleophile in the catalytic mechanism. Active-site residues include His-180 and Glu-182. In terms of domain architecture, GMPS ATP-PPase spans 207–400 (WTPEHIIDEA…LGLPHDMVYR (194 aa)). 234–240 (SGGVDSS) contributes to the ATP binding site.

As to quaternary structure, homodimer.

The enzyme catalyses XMP + L-glutamine + ATP + H2O = GMP + L-glutamate + AMP + diphosphate + 2 H(+). The protein operates within purine metabolism; GMP biosynthesis; GMP from XMP (L-Gln route): step 1/1. Functionally, catalyzes the synthesis of GMP from XMP. In Legionella pneumophila (strain Corby), this protein is GMP synthase [glutamine-hydrolyzing].